The following is an 89-amino-acid chain: Small ribosomal subunit protein uS19 (89 aa).

The protein belongs to the universal ribosomal protein uS19 family.

In terms of biological role, protein S19 forms a complex with S13 that binds strongly to the 16S ribosomal RNA. The chain is Small ribosomal subunit protein uS19 from Akkermansia muciniphila (strain ATCC BAA-835 / DSM 22959 / JCM 33894 / BCRC 81048 / CCUG 64013 / CIP 107961 / Muc).